The chain runs to 461 residues: L-seryl-tRNA(Sec) selenium transferase (461 aa).

Lys-294 is subject to N6-(pyridoxal phosphate)lysine.

Belongs to the SelA family. Requires pyridoxal 5'-phosphate as cofactor.

The protein resides in the cytoplasm. It carries out the reaction L-seryl-tRNA(Sec) + selenophosphate + H(+) = L-selenocysteinyl-tRNA(Sec) + phosphate. It participates in aminoacyl-tRNA biosynthesis; selenocysteinyl-tRNA(Sec) biosynthesis; selenocysteinyl-tRNA(Sec) from L-seryl-tRNA(Sec) (bacterial route): step 1/1. In terms of biological role, converts seryl-tRNA(Sec) to selenocysteinyl-tRNA(Sec) required for selenoprotein biosynthesis. The sequence is that of L-seryl-tRNA(Sec) selenium transferase from Haemophilus influenzae (strain 86-028NP).